The chain runs to 93 residues: DNA-binding protein HU 1 (93 aa).

It belongs to the bacterial histone-like protein family. In terms of assembly, homodimer.

The protein localises to the cytoplasm. The protein resides in the nucleoid. Functionally, histone-like DNA-binding protein which is capable of wrapping DNA to stabilize it, and thus to prevent its denaturation under extreme environmental conditions. The sequence is that of DNA-binding protein HU 1 (hup1) from Streptomyces coelicolor (strain ATCC BAA-471 / A3(2) / M145).